A 1009-amino-acid chain; its full sequence is Anillin-like protein 2 (1009 aa).

3 disordered regions span residues 1 to 29 (MYRR…DSNR), 272 to 295 (FGQE…QTIV), and 539 to 558 (GTGY…PTLV). Polar residues predominate over residues 542 to 557 (YSASSSGPQFTRSPTL). Residues 626–657 (SAADKINDSKRQISKLIETIEKTRKHIQLAEI) are a coiled coil. The 114-residue stretch at 892 to 1005 (DVEYRGFLYL…WLNAINDTLF (114 aa)) folds into the PH domain.

As to expression, localizes to the surface of the rachis.

Its function is as follows. Required to maintain the structure of the rachis, the central cytoplasmic core of the syncytial adult gonad. Failure to maintain the rachis leads to premature dissociation of oocytes and thereby impedes oogenesis. The sequence is that of Anillin-like protein 2 (ani-2) from Caenorhabditis elegans.